The following is a 373-amino-acid chain: Queuine tRNA-ribosyltransferase (373 aa).

Catalysis depends on D90, which acts as the Proton acceptor. Substrate is bound by residues 90–94, D144, Q193, and G220; that span reads DSGGF. The segment at 251-257 is RNA binding; sequence GVGTPED. The active-site Nucleophile is the D270. The segment at 275-279 is RNA binding; important for wobble base 34 recognition; that stretch reads TRNAR. The Zn(2+) site is built by C308, C310, C313, and H339.

It belongs to the queuine tRNA-ribosyltransferase family. Homodimer. Within each dimer, one monomer is responsible for RNA recognition and catalysis, while the other monomer binds to the replacement base PreQ1. It depends on Zn(2+) as a cofactor.

The catalysed reaction is 7-aminomethyl-7-carbaguanine + guanosine(34) in tRNA = 7-aminomethyl-7-carbaguanosine(34) in tRNA + guanine. It functions in the pathway tRNA modification; tRNA-queuosine biosynthesis. Its function is as follows. Catalyzes the base-exchange of a guanine (G) residue with the queuine precursor 7-aminomethyl-7-deazaguanine (PreQ1) at position 34 (anticodon wobble position) in tRNAs with GU(N) anticodons (tRNA-Asp, -Asn, -His and -Tyr). Catalysis occurs through a double-displacement mechanism. The nucleophile active site attacks the C1' of nucleotide 34 to detach the guanine base from the RNA, forming a covalent enzyme-RNA intermediate. The proton acceptor active site deprotonates the incoming PreQ1, allowing a nucleophilic attack on the C1' of the ribose to form the product. After dissociation, two additional enzymatic reactions on the tRNA convert PreQ1 to queuine (Q), resulting in the hypermodified nucleoside queuosine (7-(((4,5-cis-dihydroxy-2-cyclopenten-1-yl)amino)methyl)-7-deazaguanosine). This Campylobacter jejuni subsp. jejuni serotype O:2 (strain ATCC 700819 / NCTC 11168) protein is Queuine tRNA-ribosyltransferase.